The following is a 268-amino-acid chain: Small ribosomal subunit protein uS3 (268 aa).

Residues 39-107 form the KH type-2 domain; that stretch reads VREYLKKKLK…PVHVNIEEIR (69 aa). Residues 216 to 268 form a disordered region; the sequence is VEEVAEEKRPRRNARPGGDRRPRRDGEGGGPAGARRGAPRRAGGAGGDGKTGE. Over residues 232–242 the composition is skewed to basic and acidic residues; sequence GGDRRPRRDGE. Positions 248 to 257 are enriched in low complexity; sequence GARRGAPRRA. Residues 258–268 show a composition bias toward gly residues; it reads GGAGGDGKTGE.

The protein belongs to the universal ribosomal protein uS3 family. Part of the 30S ribosomal subunit. Forms a tight complex with proteins S10 and S14.

Binds the lower part of the 30S subunit head. Binds mRNA in the 70S ribosome, positioning it for translation. The polypeptide is Small ribosomal subunit protein uS3 (Paraburkholderia phytofirmans (strain DSM 17436 / LMG 22146 / PsJN) (Burkholderia phytofirmans)).